A 122-amino-acid polypeptide reads, in one-letter code: Prefoldin subunit 1 (122 aa).

A2 is subject to N-acetylalanine.

The protein belongs to the prefoldin subunit beta family. Heterohexamer of two PFD-alpha type and four PFD-beta type subunits.

Its function is as follows. Binds specifically to cytosolic chaperonin (c-CPN) and transfers target proteins to it. Binds to nascent polypeptide chain and promotes folding in an environment in which there are many competing pathways for nonnative proteins. The sequence is that of Prefoldin subunit 1 (PFDN1) from Bos taurus (Bovine).